The primary structure comprises 217 residues: Eukaryotic translation initiation factor 4E (217 aa).

The segment covering 1-11 (MATVEPETTPT) has biased composition (low complexity). The interval 1 to 27 (MATVEPETTPTTNPPPAEEEKTESNQE) is disordered. A2 bears the N-acetylalanine mark. T22 bears the Phosphothreonine mark. The tract at residues 37–40 (HPLQ) is EIF4EBP1/2/3 binding. 56–57 (WQ) provides a ligand contact to mRNA. The tract at residues 73-77 (WALYN) is EIF4EBP1/2/3 binding. MRNA is bound at residue 102–103 (WE). Residues 132 to 139 (ETLLCLIG) are EIF4EBP1/2/3 binding. Residues 157 to 162 (RAKGDK) and 205 to 207 (TKS) each bind mRNA. S209 bears the Phosphoserine; by PKC and MKNK2 mark.

This sequence belongs to the eukaryotic initiation factor 4E family. EIF4F is a multi-subunit complex, the composition of which varies with external and internal environmental conditions. It is composed of at least EIF4A, EIF4E and EIF4G1/EIF4G3. EIF4E is also known to interact with other partners. Interacts with EIF4ENIF1/4E-T; promotes recruitment to P-bodies and import into the nucleus. Hypophosphorylated EIF4EBP1, EIF4EBP2 and EIF4EBP3 compete with EIF4G1/EIF4G3 to interact with EIF4E; insulin stimulated MAP-kinase (MAPK1 and MAPK3) phosphorylation of EIF4EBP1 causes dissociation of the complex allowing EIF4G1/EIF4G3 to bind and consequent initiation of translation. Interacts mutually exclusive with EIF4A1 or EIF4A2. Interacts with NGDN and PIWIL2. Component of the CYFIP1-EIF4E-FMR1 complex composed of CYFIP, EIF4E and FMR1. Interacts directly with CYFIP1. Interacts with CLOCK. Binds to MKNK2 in nucleus. Interacts with LIMD1, WTIP and AJUBA. Interacts with APOBEC3G in an RNA-dependent manner. Interacts with LARP1. Interacts with METTL3. Interacts with RBM24; this interaction prevents EIF4E from binding to p53/TP53 mRNA and inhibits the assembly of translation initiation complex. Interacts with DDX3X; interaction is direct and in an RNA-independent manner; this interaction enhances EIF4E cap-binding ability and is required for the repression of cap-dependent translation and the increase of IRES-mediated translation. DDX3X competes with EIF4G1 for interaction with EIF4E. Interacts with EIF4G1; which in a mutual exclusive interaction associates either with EIF1 or with EIF4E on a common binding site. Interacts with BTG4 and CNOT7. Interacts with LRPPRC (via N-terminus); the interaction promotes association of EIF4E with 4ESE-containing mRNAs. Interacts with mRNA cleavage enzyme CPSF3 and its cofactor CPSF1. Interacts (via RING-type zinc finger) with PML; the interaction results in conformational changes of both interacting proteins and reduces EIF4E affinity for the 5' m7G cap of mRNA, thus reducing EIF4E-mediated mRNA nuclear export. Interacts with homeobox protein HHEX/PRH; the interaction inhibits EIF4E-mediated mRNA nuclear export. Interacts with homeobox protein HOXA9; the interaction positively regulates EIF4E-mediated mRNA nuclear export. Interacts with homeobox protein EMX2. As to quaternary structure, (Microbial infection) Interacts with murine norovirus viral genome-linked protein; this interaction plays a role in translation of viral proteins. Post-translationally, phosphorylation increases the ability of the protein to bind to mRNA caps and to form the eIF4F complex. Phosphorylation also enhances its mRNA transport function. Phosphorylation at Ser-209 is not essential for protein synthesis.

The protein resides in the cytoplasm. Its subcellular location is the P-body. The protein localises to the stress granule. It is found in the nucleus. It localises to the nucleus speckle. The protein resides in the nuclear body. Functionally, acts in the cytoplasm to initiate and regulate protein synthesis and is required in the nucleus for export of a subset of mRNAs from the nucleus to the cytoplasm which promotes processes such as RNA capping, processing and splicing. Component of the protein complex eIF4F, which is involved in the recognition of the mRNA cap, ATP-dependent unwinding of 5'-terminal secondary structure and recruitment of mRNA to the ribosome. This protein recognizes and binds the 7-methylguanosine (m7G)-containing mRNA cap during an early step in the initiation of protein synthesis and facilitates ribosome binding by inducing the unwinding of the mRNAs secondary structures. Together with EIF4G1, antagonizes the scanning promoted by EIF1-EIF4G1 and is required for TISU translation, a process where the TISU element recognition makes scanning unnecessary. In addition to its role in translation initiation, also acts as a regulator of translation and stability in the cytoplasm. Component of the CYFIP1-EIF4E-FMR1 complex which binds to the mRNA cap and mediates translational repression: in the complex, EIF4E mediates the binding to the mRNA cap. Component of a multiprotein complex that sequesters and represses translation of proneurogenic factors during neurogenesis. In P-bodies, component of a complex that mediates the storage of translationally inactive mRNAs in the cytoplasm and prevents their degradation. May play an important role in spermatogenesis through translational regulation of stage-specific mRNAs during germ cell development. As well as its roles in translation, also involved in mRNA nucleocytoplasmic transport. Its role in mRNA export from the nucleus to the cytoplasm relies on its ability to bind the m7G cap of RNAs and on the presence of the 50-nucleotide EIF4E sensitivity element (4ESE) in the 3'UTR of sensitive transcripts. Interaction with the 4ESE is mediated by LRPPRC which binds simultaneously to both EIF4E and the 4ESE, thereby acting as a platform for assembly for the RNA export complex. EIF4E-dependent mRNA export is independent of ongoing protein or RNA synthesis and is also NFX1-independent but is XPO1-dependent with LRPPRC interacting with XPO1 to form an EIF4E-dependent mRNA export complex. Alters the composition of the cytoplasmic face of the nuclear pore to promote RNA export by reducing RANBP2 expression, relocalizing nucleoporin NUP214 and increasing expression of RANBP1 and RNA export factors DDX19 and GLE1. Promotes the nuclear export of cyclin CCND1 mRNA. Promotes the nuclear export of NOS2/iNOS mRNA. Promotes the nuclear export of MDM2 mRNA. Also promotes the export of additional mRNAs, including others involved in the cell cycle. In the nucleus, binds to capped splice factor-encoding mRNAs and stimulates their nuclear export to enhance splice factor production by increasing their cytoplasmic availability to the translation machinery. May also regulate splicing through interaction with the spliceosome in an RNA and m7G cap-dependent manner. Also binds to some pre-mRNAs and may play a role in their recruitment to the spliceosome. Promotes steady-state capping of a subset of coding and non-coding RNAs by mediating nuclear export of capping machinery mRNAs including RNMT, RNGTT and RAMAC to enhance their translation. Stimulates mRNA 3'-end processing by promoting the expression of several core cleavage complex factors required for mRNA cleavage and polyadenylation, and may also have a direct effect through its interaction with the CPSF3 cleavage enzyme. Rescues cells from apoptosis by promoting activation of serine/threonine-protein kinase AKT1 through mRNA export of NBS1 which potentiates AKT1 phosphorylation and also through mRNA export of AKT1 effectors, allowing for increased production of these proteins. The sequence is that of Eukaryotic translation initiation factor 4E from Mus musculus (Mouse).